We begin with the raw amino-acid sequence, 840 residues long: Protein translocase subunit SecA (840 aa).

Residues Gln87, 105-109 (GEGKT), and Asp494 each bind ATP. Residues 791 to 840 (LRKEQEDQPMFFGPAEGAGQKPQTRKDRKVGRNDPCPCGSGKKYKKCCGK) are disordered. Residues Cys826, Cys828, Cys837, and Cys838 each coordinate Zn(2+).

It belongs to the SecA family. As to quaternary structure, monomer and homodimer. Part of the essential Sec protein translocation apparatus which comprises SecA, SecYEG and auxiliary proteins SecDF-YajC and YidC. Requires Zn(2+) as cofactor.

The protein resides in the cell inner membrane. It is found in the cytoplasm. The enzyme catalyses ATP + H2O + cellular proteinSide 1 = ADP + phosphate + cellular proteinSide 2.. In terms of biological role, part of the Sec protein translocase complex. Interacts with the SecYEG preprotein conducting channel. Has a central role in coupling the hydrolysis of ATP to the transfer of proteins into and across the cell membrane, serving as an ATP-driven molecular motor driving the stepwise translocation of polypeptide chains across the membrane. The chain is Protein translocase subunit SecA from Syntrophobacter fumaroxidans (strain DSM 10017 / MPOB).